We begin with the raw amino-acid sequence, 200 residues long: GTP cyclohydrolase 1 (200 aa).

Zn(2+) contacts are provided by C87, H90, and C158.

The protein belongs to the GTP cyclohydrolase I family. As to quaternary structure, toroid-shaped homodecamer, composed of two pentamers of five dimers.

The catalysed reaction is GTP + H2O = 7,8-dihydroneopterin 3'-triphosphate + formate + H(+). It participates in cofactor biosynthesis; 7,8-dihydroneopterin triphosphate biosynthesis; 7,8-dihydroneopterin triphosphate from GTP: step 1/1. The polypeptide is GTP cyclohydrolase 1 (Xanthomonas axonopodis pv. citri (strain 306)).